The sequence spans 265 residues: Non-seed lectin (265 aa).

Residues 1–21 (MALYRTKELVSLVSIMFVLLA) constitute a signal peptide (or 23). N-linked (GlcNAc...) asparagine glycans are attached at residues asparagine 59 and asparagine 127.

This sequence belongs to the leguminous lectin family. In terms of assembly, monomer. In terms of tissue distribution, most highly expressed in the epidermal layer of developing shoot tips.

This is Non-seed lectin from Pisum sativum (Garden pea).